A 365-amino-acid chain; its full sequence is Alpha-keto acid-binding periplasmic protein TakP (365 aa).

Positions 1-26 (MDRRSFITKAAVGGAAASALAAPALA) form a signal peptide, tat-type signal. Residues 99-100 (YY), Gln156, and Arg177 contribute to the substrate site. Na(+) is bound at residue Gln156. The Na(+) site is built by Glu214, Trp215, and Glu240.

This sequence belongs to the bacterial solute-binding protein 7 family. As to quaternary structure, homodimer. The complex comprises the extracytoplasmic solute receptor protein TakP, and the two transmembrane proteins TakQ and TakM. Predicted to be exported by the Tat system. The position of the signal peptide cleavage has not been experimentally proven.

Its subcellular location is the periplasm. Part of the tripartite ATP-independent periplasmic (TRAP) transport system TakPQM involved in the uptake of alpha-keto acids. This protein specifically binds alpha-keto acids including pyruvate, oxobutyrate, oxovalerate and 4-methyl-2-oxovalerate. Ligand-binding affinity increases with the increasing chain length of the aliphatic backbone of the ligand. Is not able to bind alpha-ketoglutarate. This Cereibacter sphaeroides (strain ATCC 17023 / DSM 158 / JCM 6121 / CCUG 31486 / LMG 2827 / NBRC 12203 / NCIMB 8253 / ATH 2.4.1.) (Rhodobacter sphaeroides) protein is Alpha-keto acid-binding periplasmic protein TakP.